The sequence spans 103 residues: Sec-independent protein translocase protein TatA (103 aa).

The chain crosses the membrane as a helical span at residues 1–21; it reads MGNIFSPTHLIIILLLILLLF. The segment at 48–103 is disordered; the sequence is EESIEDKVEMADTSQVINEESQQSQPLSVKRAAIRRKASSDSKGGKASIAKKQRVK. The span at 59 to 74 shows a compositional bias: polar residues; sequence DTSQVINEESQQSQPL.

It belongs to the TatA/E family. In terms of assembly, the Tat system comprises two distinct complexes: a TatABC complex, containing multiple copies of TatA, TatB and TatC subunits, and a separate TatA complex, containing only TatA subunits. Substrates initially bind to the TatABC complex, which probably triggers association of the separate TatA complex to form the active translocon.

The protein resides in the cell inner membrane. Functionally, part of the twin-arginine translocation (Tat) system that transports large folded proteins containing a characteristic twin-arginine motif in their signal peptide across membranes. TatA could form the protein-conducting channel of the Tat system. The protein is Sec-independent protein translocase protein TatA of Bartonella tribocorum (strain CIP 105476 / IBS 506).